A 551-amino-acid polypeptide reads, in one-letter code: Cytochrome c oxidase subunit 1 (551 aa).

Residues 34-54 (TLYLYSGVWGGLFGASLSLMI) traverse the membrane as a helical segment. Residue glycine 62 coordinates Ca(2+). A Fe(II)-heme a-binding site is contributed by histidine 79. 6 helical membrane passes run 81–101 (LMMI…NWLI), 126–146 (ALYL…GWTI), 163–183 (VLIV…INFA), 209–229 (TAVL…MILF), 252–272 (LFWF…FGVM), and 285–305 (VFGL…GCMV). Histidine 258 contributes to the Cu cation binding site. A cross-link (1'-histidyl-3'-tyrosine (His-Tyr)) is located at residues 258-262 (HPEVY). Tyrosine 262 contributes to the O2 binding site. The Cu cation site is built by histidine 308 and histidine 309. The next 2 helical transmembrane spans lie at 326 to 346 (ATMV…ATMA) and 356 to 376 (AYWS…GVLL). Mg(2+)-binding residues include histidine 386 and aspartate 387. Helical transmembrane passes span 391-411 (VVAH…FCGL), 432-452 (FMAM…LGLS), and 475-495 (GSAV…EALV). Histidine 394 serves as a coordination point for heme a3. A Fe(II)-heme a-binding site is contributed by histidine 396.

It belongs to the heme-copper respiratory oxidase family. As to quaternary structure, component of the cytochrome c oxidase (complex IV, CIV), a multisubunit enzyme composed of a catalytic core of 3 subunits and several supernumerary subunits. The complex exists as a monomer or a dimer and forms supercomplexes (SCs) in the inner mitochondrial membrane with ubiquinol-cytochrome c oxidoreductase (cytochrome b-c1 complex, complex III, CIII). The cofactor is heme. Cu cation serves as cofactor.

It localises to the mitochondrion inner membrane. The enzyme catalyses 4 Fe(II)-[cytochrome c] + O2 + 8 H(+)(in) = 4 Fe(III)-[cytochrome c] + 2 H2O + 4 H(+)(out). Its pathway is energy metabolism; oxidative phosphorylation. Its function is as follows. Component of the cytochrome c oxidase, the last enzyme in the mitochondrial electron transport chain which drives oxidative phosphorylation. The respiratory chain contains 3 multisubunit complexes succinate dehydrogenase (complex II, CII), ubiquinol-cytochrome c oxidoreductase (cytochrome b-c1 complex, complex III, CIII) and cytochrome c oxidase (complex IV, CIV), that cooperate to transfer electrons derived from NADH and succinate to molecular oxygen, creating an electrochemical gradient over the inner membrane that drives transmembrane transport and the ATP synthase. Cytochrome c oxidase is the component of the respiratory chain that catalyzes the reduction of oxygen to water. Electrons originating from reduced cytochrome c in the intermembrane space (IMS) are transferred via the dinuclear copper A center (CU(A)) of subunit 2 and heme A of subunit 1 to the active site in subunit 1, a binuclear center (BNC) formed by heme A3 and copper B (CU(B)). The BNC reduces molecular oxygen to 2 water molecules using 4 electrons from cytochrome c in the IMS and 4 protons from the mitochondrial matrix. The sequence is that of Cytochrome c oxidase subunit 1 (COI) from Mytilus edulis (Blue mussel).